The sequence spans 357 residues: NADH-quinone oxidoreductase subunit H (357 aa).

The next 8 membrane-spanning stretches (helical) occupy residues 26–46 (LVKI…LTLW), 92–112 (ALFV…WAVI), 127–147 (LLFV…AGWA), 164–184 (MISY…VTGS), 203–223 (GLTF…IYII), 259–279 (FFLA…LMFL), 294–314 (VPGW…FIWF), and 329–349 (LGWK…AIWM).

Belongs to the complex I subunit 1 family. In terms of assembly, NDH-1 is composed of 14 different subunits. Subunits NuoA, H, J, K, L, M, N constitute the membrane sector of the complex.

It localises to the cell inner membrane. It catalyses the reaction a quinone + NADH + 5 H(+)(in) = a quinol + NAD(+) + 4 H(+)(out). Functionally, NDH-1 shuttles electrons from NADH, via FMN and iron-sulfur (Fe-S) centers, to quinones in the respiratory chain. The immediate electron acceptor for the enzyme in this species is believed to be ubiquinone. Couples the redox reaction to proton translocation (for every two electrons transferred, four hydrogen ions are translocated across the cytoplasmic membrane), and thus conserves the redox energy in a proton gradient. This subunit may bind ubiquinone. The sequence is that of NADH-quinone oxidoreductase subunit H from Janthinobacterium sp. (strain Marseille) (Minibacterium massiliensis).